We begin with the raw amino-acid sequence, 77 residues long: Putative defensin-like protein 160 (77 aa).

An N-terminal signal peptide occupies residues 1–24 (MAKLSCSYFFILMLVFSALLMVEC). Intrachain disulfides connect C30–C77, C40–C59, C45–C71, and C49–C73.

It belongs to the DEFL family.

The protein localises to the secreted. The polypeptide is Putative defensin-like protein 160 (LCR26) (Arabidopsis thaliana (Mouse-ear cress)).